A 156-amino-acid chain; its full sequence is D-aminoacyl-tRNA deacylase (156 aa).

A Gly-cisPro motif, important for rejection of L-amino acids motif is present at residues Gly-137–Pro-138.

The protein belongs to the DTD family. As to quaternary structure, homodimer.

Its subcellular location is the cytoplasm. It carries out the reaction glycyl-tRNA(Ala) + H2O = tRNA(Ala) + glycine + H(+). The enzyme catalyses a D-aminoacyl-tRNA + H2O = a tRNA + a D-alpha-amino acid + H(+). An aminoacyl-tRNA editing enzyme that deacylates mischarged D-aminoacyl-tRNAs. Also deacylates mischarged glycyl-tRNA(Ala), protecting cells against glycine mischarging by AlaRS. Acts via tRNA-based rather than protein-based catalysis; rejects L-amino acids rather than detecting D-amino acids in the active site. By recycling D-aminoacyl-tRNA to D-amino acids and free tRNA molecules, this enzyme counteracts the toxicity associated with the formation of D-aminoacyl-tRNA entities in vivo and helps enforce protein L-homochirality. This chain is D-aminoacyl-tRNA deacylase, found in Ruegeria sp. (strain TM1040) (Silicibacter sp.).